The following is a 900-amino-acid chain: Alanine--tRNA ligase (900 aa).

Residues His604, His608, Cys708, and His712 each contribute to the Zn(2+) site.

It belongs to the class-II aminoacyl-tRNA synthetase family. Requires Zn(2+) as cofactor.

It localises to the cytoplasm. The enzyme catalyses tRNA(Ala) + L-alanine + ATP = L-alanyl-tRNA(Ala) + AMP + diphosphate. Its function is as follows. Catalyzes the attachment of alanine to tRNA(Ala) in a two-step reaction: alanine is first activated by ATP to form Ala-AMP and then transferred to the acceptor end of tRNA(Ala). Also edits incorrectly charged Ser-tRNA(Ala) and Gly-tRNA(Ala) via its editing domain. The chain is Alanine--tRNA ligase from Saccharolobus islandicus (strain M.14.25 / Kamchatka #1) (Sulfolobus islandicus).